A 152-amino-acid polypeptide reads, in one-letter code: Kininogen-1c (152 aa).

The N-terminal stretch at 1–23 is a signal peptide; sequence MRLWFCLSLFIVLCLEHFPGTLA. Over residues 28 to 44 the composition is skewed to basic and acidic residues; it reads VPESEEKTEQFLRDLPK. A disordered region spans residues 28–152; it reads VPESEEKTEQ…RGKFHSQSHV (125 aa).

Belongs to the bradykinin-related peptide family. In terms of tissue distribution, expressed by the skin glands.

It is found in the secreted. Potent vasodilator. Binds B1 (BDKRB1) and B2 (BDKRB2) bradykinin receptors. This chain is Kininogen-1c, found in Bombina maxima (Giant fire-bellied toad).